Reading from the N-terminus, the 192-residue chain is MLAPALNLPKWLEENSHLLQPPINNYCVYHPSAPATQGYTVMVVGGPNVRTDYHINPTPEFFYQHRGSMLLRTVDQSTSPPTFQDIPIHEGSLFLLPANTPHCPVRFADTVGVVLEVPRPENATDCMRWYCKGCGEIVWEKKFHCTDLGTQVKEVVEEFAADDEKRKCKACGSVRSVRYEDGEVVQPPRAPE.

Arg50 provides a ligand contact to O2. Positions 54, 60, and 102 each coordinate Fe cation. Residue Glu60 participates in substrate binding. Arg106 and Glu116 together coordinate substrate. The a divalent metal cation site is built by Cys131, Cys134, Cys168, and Cys171.

Belongs to the 3-HAO family. It depends on Fe(2+) as a cofactor.

Its subcellular location is the cytoplasm. The catalysed reaction is 3-hydroxyanthranilate + O2 = (2Z,4Z)-2-amino-3-carboxymuconate 6-semialdehyde. It participates in cofactor biosynthesis; NAD(+) biosynthesis; quinolinate from L-kynurenine: step 3/3. Catalyzes the oxidative ring opening of 3-hydroxyanthranilate to 2-amino-3-carboxymuconate semialdehyde, which spontaneously cyclizes to quinolinate. In Coccidioides immitis (strain RS) (Valley fever fungus), this protein is 3-hydroxyanthranilate 3,4-dioxygenase.